The sequence spans 560 residues: DNA ligase B (560 aa).

Residue K124 is the N6-AMP-lysine intermediate of the active site.

It belongs to the NAD-dependent DNA ligase family. LigB subfamily.

The enzyme catalyses NAD(+) + (deoxyribonucleotide)n-3'-hydroxyl + 5'-phospho-(deoxyribonucleotide)m = (deoxyribonucleotide)n+m + AMP + beta-nicotinamide D-nucleotide.. Functionally, catalyzes the formation of phosphodiester linkages between 5'-phosphoryl and 3'-hydroxyl groups in double-stranded DNA using NAD as a coenzyme and as the energy source for the reaction. The protein is DNA ligase B of Escherichia coli O7:K1 (strain IAI39 / ExPEC).